Reading from the N-terminus, the 401-residue chain is 8-amino-7-oxononanoate synthase (401 aa).

R19 contributes to the substrate binding site. 106–107 (GY) is a pyridoxal 5'-phosphate binding site. Substrate is bound at residue H131. Residues S176, H204, and T233 each coordinate pyridoxal 5'-phosphate. K236 carries the post-translational modification N6-(pyridoxal phosphate)lysine. T350 lines the substrate pocket.

The protein belongs to the class-II pyridoxal-phosphate-dependent aminotransferase family. BioF subfamily. Homodimer. Requires pyridoxal 5'-phosphate as cofactor.

It catalyses the reaction 6-carboxyhexanoyl-[ACP] + L-alanine + H(+) = (8S)-8-amino-7-oxononanoate + holo-[ACP] + CO2. It functions in the pathway cofactor biosynthesis; biotin biosynthesis. In terms of biological role, catalyzes the decarboxylative condensation of pimeloyl-[acyl-carrier protein] and L-alanine to produce 8-amino-7-oxononanoate (AON), [acyl-carrier protein], and carbon dioxide. This Pseudomonas aeruginosa (strain ATCC 15692 / DSM 22644 / CIP 104116 / JCM 14847 / LMG 12228 / 1C / PRS 101 / PAO1) protein is 8-amino-7-oxononanoate synthase.